Reading from the N-terminus, the 793-residue chain is ClpA homolog protein (793 aa).

The interval 1 to 24 (MRPRSNAGSSPPDPEEQEHAQVPS) is disordered. The 147-residue stretch at 22–168 (VPSFSSTLEQ…NFIAHGVAKD (147 aa)) folds into the Clp R domain. Repeat stretches follow at residues 25–88 (FSST…IDDD) and 103–168 (PTAA…VAKD). The segment at 169–194 (PSYGESRPVQGADEPQETPKAEAGEA) is disordered. The segment covering 185-194 (ETPKAEAGEA) has biased composition (basic and acidic residues). The tract at residues 199-447 (LSKYCVDLNI…AQHLVSDSKR (249 aa)) is i. Residues 244–251 (GDPGVGKT) and 525–532 (GPTGVGKT) contribute to the ATP site. Residues 451–639 (LGTKEIEAVV…ILIMTSNVGA (189 aa)) are II.

It belongs to the ClpA/ClpB family.

The protein is ClpA homolog protein of Fuscovulum blasticum (Rhodobacter blasticus).